The primary structure comprises 122 residues: Large ribosomal subunit protein uL14 (122 aa).

It belongs to the universal ribosomal protein uL14 family. As to quaternary structure, part of the 50S ribosomal subunit. Forms a cluster with proteins L3 and L19. In the 70S ribosome, L14 and L19 interact and together make contacts with the 16S rRNA in bridges B5 and B8.

Functionally, binds to 23S rRNA. Forms part of two intersubunit bridges in the 70S ribosome. The polypeptide is Large ribosomal subunit protein uL14 (Syntrophus aciditrophicus (strain SB)).